The sequence spans 316 residues: Protoheme IX farnesyltransferase 2 (316 aa).

Over residues 1–15 the composition is skewed to polar residues; that stretch reads MEQNLNSEQKPQSSA. The tract at residues 1–24 is disordered; sequence MEQNLNSEQKPQSSAKPRGKSSRS. A run of 7 helical transmembrane segments spans residues 62–82, 117–137, 163–183, 188–208, 231–251, 252–272, and 293–313; these read IPEMIFSTVGSALVIGAAGAF, IVMLIIGLAVLALASPLAAAF, IGSISGAVPPLIGWSAVSTDI, IARFIFVMVIWQMPHFYAIAI, TYYQTNFYLILLILSSFLFGS, LSVGIMLVALLLSIAWLVMSI, and LFHMTILFTTVIVYSLVGVIF.

Belongs to the UbiA prenyltransferase family. Protoheme IX farnesyltransferase subfamily. Interacts with CtaA.

Its subcellular location is the cell membrane. It catalyses the reaction heme b + (2E,6E)-farnesyl diphosphate + H2O = Fe(II)-heme o + diphosphate. The protein operates within porphyrin-containing compound metabolism; heme O biosynthesis; heme O from protoheme: step 1/1. Converts heme B (protoheme IX) to heme O by substitution of the vinyl group on carbon 2 of heme B porphyrin ring with a hydroxyethyl farnesyl side group. This is Protoheme IX farnesyltransferase 2 from Lysinibacillus sphaericus (strain C3-41).